A 405-amino-acid polypeptide reads, in one-letter code: L-carnitine CoA-transferase (405 aa).

CoA is bound by residues Lys-97 and Arg-104. The active-site Nucleophile is the Asp-169.

This sequence belongs to the CoA-transferase III family. CaiB subfamily. Homodimer.

It localises to the cytoplasm. The enzyme catalyses crotonobetainyl-CoA + (R)-carnitine = crotonobetaine + (R)-carnitinyl-CoA. It catalyses the reaction 4-(trimethylamino)butanoyl-CoA + (R)-carnitine = (R)-carnitinyl-CoA + 4-(trimethylamino)butanoate. It participates in amine and polyamine metabolism; carnitine metabolism. Its function is as follows. Catalyzes the reversible transfer of the CoA moiety from gamma-butyrobetainyl-CoA to L-carnitine to generate L-carnitinyl-CoA and gamma-butyrobetaine. Is also able to catalyze the reversible transfer of the CoA moiety from gamma-butyrobetainyl-CoA or L-carnitinyl-CoA to crotonobetaine to generate crotonobetainyl-CoA. The protein is L-carnitine CoA-transferase of Shigella flexneri serotype 5b (strain 8401).